A 103-amino-acid chain; its full sequence is Photosystem II 5 kDa protein, chloroplastic (103 aa).

Residues 1 to 75 constitute a chloroplast transit peptide; it reads MASMTMTATF…LAKVAMAEEE (75 aa).

The maturation of the PSII-T precursor to its final form occurs through a two step process. First, a stromal intermediate is formed, which, upon translocation into the thylakoid membrane, is processed to the mature protein.

It is found in the plastid. It localises to the chloroplast thylakoid membrane. Functionally, may be a component of the oxygen-evolving complex. The protein is Photosystem II 5 kDa protein, chloroplastic (PSBT) of Arabidopsis thaliana (Mouse-ear cress).